Reading from the N-terminus, the 145-residue chain is Aminoglycoside N(6')-acetyltransferase type 1 (145 aa).

The region spanning 1-145 (MDIRQMNKTH…ERVIFYRKRC (145 aa)) is the N-acetyltransferase domain. Residues Trp-22, His-25, Tyr-66, and Glu-79 each contribute to the substrate site. Residues 81–83 (IFV) and 89–94 (QRGVAK) each bind acetyl-CoA. Asp-115 is a binding site for substrate. An acetyl-CoA-binding site is contributed by Asn-120. Substrate is bound at residue Glu-136.

As to quaternary structure, homodimer.

It carries out the reaction kanamycin B + acetyl-CoA = N(6')-acetylkanamycin B + CoA + H(+). Its function is as follows. Catalyzes the transfer of an acetyl group from acetyl-CoA to the 6'-amino group of aminoglycoside molecules conferring resistance to antibiotics containing the purpurosamine ring including amikacin, tobramycin, dibekacin and ribostamycin. Able to acetylate eukaryotic histone proteins. The polypeptide is Aminoglycoside N(6')-acetyltransferase type 1 (Salmonella enteritidis).